Reading from the N-terminus, the 239-residue chain is 4-hydroxy-tetrahydrodipicolinate reductase (239 aa).

NAD(+) contacts are provided by residues 9-14 (GINGKM), 78-80 (GTT), and 104-107 (APNF). H134 acts as the Proton donor/acceptor in catalysis. H135 lines the (S)-2,3,4,5-tetrahydrodipicolinate pocket. K138 serves as the catalytic Proton donor. 144–145 (GT) is a (S)-2,3,4,5-tetrahydrodipicolinate binding site.

The protein belongs to the DapB family.

It is found in the cytoplasm. The catalysed reaction is (S)-2,3,4,5-tetrahydrodipicolinate + NAD(+) + H2O = (2S,4S)-4-hydroxy-2,3,4,5-tetrahydrodipicolinate + NADH + H(+). It carries out the reaction (S)-2,3,4,5-tetrahydrodipicolinate + NADP(+) + H2O = (2S,4S)-4-hydroxy-2,3,4,5-tetrahydrodipicolinate + NADPH + H(+). It participates in amino-acid biosynthesis; L-lysine biosynthesis via DAP pathway; (S)-tetrahydrodipicolinate from L-aspartate: step 4/4. Its function is as follows. Catalyzes the conversion of 4-hydroxy-tetrahydrodipicolinate (HTPA) to tetrahydrodipicolinate. The chain is 4-hydroxy-tetrahydrodipicolinate reductase from Coxiella burnetii (strain Dugway 5J108-111).